Consider the following 475-residue polypeptide: ATP synthase subunit beta (475 aa).

161 to 168 (GGAGVGKT) is an ATP binding site.

The protein belongs to the ATPase alpha/beta chains family. In terms of assembly, F-type ATPases have 2 components, CF(1) - the catalytic core - and CF(0) - the membrane proton channel. CF(1) has five subunits: alpha(3), beta(3), gamma(1), delta(1), epsilon(1). CF(0) has three main subunits: a(1), b(2) and c(9-12). The alpha and beta chains form an alternating ring which encloses part of the gamma chain. CF(1) is attached to CF(0) by a central stalk formed by the gamma and epsilon chains, while a peripheral stalk is formed by the delta and b chains.

Its subcellular location is the cell membrane. The enzyme catalyses ATP + H2O + 4 H(+)(in) = ADP + phosphate + 5 H(+)(out). Functionally, produces ATP from ADP in the presence of a proton gradient across the membrane. The catalytic sites are hosted primarily by the beta subunits. This chain is ATP synthase subunit beta, found in Mycoplasma mycoides subsp. mycoides SC (strain CCUG 32753 / NCTC 10114 / PG1).